A 518-amino-acid polypeptide reads, in one-letter code: Coiled-coil domain-containing protein 82 (518 aa).

Residues 1–14 (MVHVRRHETRKNSK) are compositionally biased toward basic residues. Residues 1–266 (MVHVRRHETR…EDDYRYDEDG (266 aa)) form a disordered region. Positions 16–27 (QKPEQKSRVDWH) are enriched in basic and acidic residues. The segment covering 38-67 (DSDEELDSNEELDSDEEHDSGESIDSDEEL) has biased composition (acidic residues). Basic and acidic residues predominate over residues 68–89 (DISKKSDINELPEKETELKLIK). Residues 92-107 (SQGSNSKHLTNTSNSS) show a composition bias toward polar residues. The span at 111-127 (EQLKETKHNDLPDDEAH) shows a compositional bias: basic and acidic residues. Residues Ser170 and Ser194 each carry the phosphoserine modification. The span at 191–201 (DECSSLEMEQE) shows a compositional bias: acidic residues. Thr202 carries the post-translational modification Phosphothreonine. Positions 204–232 (EKSSAARKREYHQKLQELSERSRQRRRRN) form a coiled coil. Over residues 215–225 (HQKLQELSERS) the composition is skewed to basic and acidic residues. Acidic residues predominate over residues 249–266 (GEEDEDEDEDDYRYDEDG). Position 305 is a phosphoserine (Ser305).

The polypeptide is Coiled-coil domain-containing protein 82 (Ccdc82) (Mus musculus (Mouse)).